We begin with the raw amino-acid sequence, 149 residues long: UPF0178 protein VFMJ11_0615 (149 aa).

This sequence belongs to the UPF0178 family.

The polypeptide is UPF0178 protein VFMJ11_0615 (Aliivibrio fischeri (strain MJ11) (Vibrio fischeri)).